A 265-amino-acid chain; its full sequence is Thiazole synthase (265 aa).

Catalysis depends on Lys-103, which acts as the Schiff-base intermediate with DXP. Residues Gly-164, Ala-190–Gly-191, and Asn-212–Thr-213 each bind 1-deoxy-D-xylulose 5-phosphate.

It belongs to the ThiG family. Homotetramer. Forms heterodimers with either ThiH or ThiS.

Its subcellular location is the cytoplasm. The enzyme catalyses [ThiS sulfur-carrier protein]-C-terminal-Gly-aminoethanethioate + 2-iminoacetate + 1-deoxy-D-xylulose 5-phosphate = [ThiS sulfur-carrier protein]-C-terminal Gly-Gly + 2-[(2R,5Z)-2-carboxy-4-methylthiazol-5(2H)-ylidene]ethyl phosphate + 2 H2O + H(+). Its pathway is cofactor biosynthesis; thiamine diphosphate biosynthesis. Its function is as follows. Catalyzes the rearrangement of 1-deoxy-D-xylulose 5-phosphate (DXP) to produce the thiazole phosphate moiety of thiamine. Sulfur is provided by the thiocarboxylate moiety of the carrier protein ThiS. In vitro, sulfur can be provided by H(2)S. The polypeptide is Thiazole synthase (Bordetella pertussis (strain Tohama I / ATCC BAA-589 / NCTC 13251)).